The sequence spans 288 residues: MCPCPHSQAQGETDGEAEWHNAALDFTHAMSYGDYLKLDKVLDAQFPLSPDHNEMLFIIQHQTSELWMKLMLHELRAAREHVKSGKLGPALKMLARVSRIFDQLVHAWAVLATMTPTEYNTIRPYLGQSSGFQSYQYREIEFILGNKNATLLKPHAHRAELLAALEQALHTPSLYDEAIRLMAAQGLPVSQERLVRDAAAGTCYEASVEAAWRQVYQTPERYWDLYQLAEKLIDLEDSFRQWRFRHVTTVERIIGFKPGTGGTEGVGYLRSMLDTILFPELWRLRSNL.

Substrate-binding positions include 57-61 (FIIQH), Tyr-119, and Arg-123. Residue His-246 coordinates heme. Residue Thr-260 participates in substrate binding.

The protein belongs to the tryptophan 2,3-dioxygenase family. Homotetramer. It depends on heme as a cofactor.

It carries out the reaction L-tryptophan + O2 = N-formyl-L-kynurenine. It functions in the pathway amino-acid degradation; L-tryptophan degradation via kynurenine pathway; L-kynurenine from L-tryptophan: step 1/2. In terms of biological role, heme-dependent dioxygenase that catalyzes the oxidative cleavage of the L-tryptophan (L-Trp) pyrrole ring and converts L-tryptophan to N-formyl-L-kynurenine. Catalyzes the oxidative cleavage of the indole moiety. This Pseudomonas aeruginosa (strain UCBPP-PA14) protein is Tryptophan 2,3-dioxygenase.